The sequence spans 366 residues: NADH-quinone oxidoreductase subunit D (366 aa).

It belongs to the complex I 49 kDa subunit family. In terms of assembly, NDH-1 is composed of 14 different subunits. Subunits NuoB, C, D, E, F, and G constitute the peripheral sector of the complex.

It is found in the cell membrane. The enzyme catalyses a quinone + NADH + 5 H(+)(in) = a quinol + NAD(+) + 4 H(+)(out). In terms of biological role, NDH-1 shuttles electrons from NADH, via FMN and iron-sulfur (Fe-S) centers, to quinones in the respiratory chain. The immediate electron acceptor for the enzyme in this species is believed to be a menaquinone. Couples the redox reaction to proton translocation (for every two electrons transferred, four hydrogen ions are translocated across the cytoplasmic membrane), and thus conserves the redox energy in a proton gradient. This Bacillus cereus (strain ZK / E33L) protein is NADH-quinone oxidoreductase subunit D.